The sequence spans 999 residues: Disks large-associated protein 1 (999 aa).

3 disordered regions span residues 155-213 (HSLE…GYWS), 395-418 (MAED…ARRA), and 918-989 (NWRP…DSIE). The span at 194 to 204 (RERCKSAEPKN) shows a compositional bias: basic and acidic residues. Basic and acidic residues-rich tracts occupy residues 923-932 (DPPERKERRL) and 947-965 (LARD…EARK). The segment covering 976–985 (VRQNSATESA) has biased composition (polar residues). A PDZ-binding motif is present at residues 997 to 999 (TRL).

The protein belongs to the SAPAP family.

The protein localises to the cell membrane. The protein resides in the postsynaptic density. It is found in the synapse. Its function is as follows. Part of the postsynaptic scaffold in neuronal cells. This chain is Disks large-associated protein 1, found in Danio rerio (Zebrafish).